Consider the following 298-residue polypeptide: Syntaxin-4 (298 aa).

Topologically, residues 1-274 are cytoplasmic; sequence MRDRTHELRQ…NQKKARKKKV (274 aa). Residues Ser15, Ser29, Ser36, Ser117, Ser208, and Ser248 each carry the phosphoserine modification. Residues 38-163 are a coiled coil; that stretch reads DDEFFQKVQT…ERIRRQLKIT (126 aa). An interaction with CENPF region spans residues 154-298; the sequence is ERIRRQLKIT…VIIGITITVG (145 aa). The t-SNARE coiled-coil homology domain maps to 200 to 262; that stretch reads LNEISARHSE…ERGQEHVKIA (63 aa). Residues 275-295 form a helical; Anchor for type IV membrane protein membrane-spanning segment; that stretch reads MIAICVSVTVLILAVIIGITI. Residues 296 to 298 lie on the Extracellular side of the membrane; sequence TVG.

This sequence belongs to the syntaxin family. Interacts with STXBP6. Component of the SNARE complex composed of STX4, SNAP23 and VAMP7 that interacts with SYT7 during lysosomal exocytosis. Found in a complex with VAMP8 and SNAP23. Detected in a complex with SNAP23 and STXBP4. Interacts with VAMP2. Interacts with SNAP23 and SNAPIN. Interacts with LLGL1. Interacts (via C-terminus) with CENPF. Interacts with DOC2B. Interacts with STXBP3; excludes interaction with DOC2B and SNAP25. Interacts with STXBP4; excludes interaction with VAMP2. Interacts with STXBP5L. Expressed in the outer and inner hair cells of the cochlea.

It is found in the cell membrane. The protein resides in the cell projection. Its subcellular location is the neuron projection. The protein localises to the stereocilium. Functionally, plasma membrane t-SNARE that mediates docking of transport vesicles. Necessary for the translocation of SLC2A4 from intracellular vesicles to the plasma membrane. In neurons, recruited at neurite tips to membrane domains rich in the phospholipid 1-oleoyl-2-palmitoyl-PC (OPPC) which promotes neurite tip surface expression of the dopamine transporter SLC6A3/DAT by facilitating fusion of SLC6A3-containing transport vesicles with the plasma membrane. Together with STXB3 and VAMP2, may also play a role in docking/fusion of intracellular GLUT4-containing vesicles with the cell surface in adipocytes and in docking of synaptic vesicles at presynaptic active zones. Required for normal hearing. The chain is Syntaxin-4 (Stx4) from Mus musculus (Mouse).